The chain runs to 565 residues: FAD-linked oxidoreductase ZEB1 (565 aa).

The N-terminal stretch at 1–27 (MKLSPSKYLPVLLGTLSLTIANPSADC) is a signal peptide. Asn-46, Asn-82, and Asn-100 each carry an N-linked (GlcNAc...) asparagine glycan. Residues 115-293 (LGNYVSYAIA…ISMTVKAHPG (179 aa)) enclose the FAD-binding PCMH-type domain. Asn-340, Asn-352, and Asn-421 each carry an N-linked (GlcNAc...) asparagine glycan.

Belongs to the oxygen-dependent FAD-linked oxidoreductase family.

It participates in mycotoxin biosynthesis. Its function is as follows. FAD-linked oxidoreductase; part of the gene cluster that mediates the biosynthesis of zearalenone (ZEA), a nonsteroid estrogen that is a contaminant of cereal grains and causes estrogenic disorders in humans and animals. The ZEA backbone is synthesized from a single acetyl-CoA molecule and eight malonyl-CoA molecules. The reducing polyketide synthase ZEA2 is proposed to synthesize a reduced hexaketide intermediate by using different combinations of its reductive domains during each round of condensation. The hexaketide thioester is then transacylated to the non-reducing polyketide synthase ZEA1 and is further condensed with three malonyl-CoAs without reductive tailoring to yield a mixed reduced/unreduced nonaketide. ZEA1 must be able to interact with ZEA2 to facilitate starter-unit acyltransfer and initiate polyketide biosynthesis. ZEA1 also mediates the required C2-C7 cyclization to form the resorcylate core and catalyzes the formation of the macrolactone. ZEB1 is then responsible for the chemical conversion of beta-zearalenonol (beta-ZOL) to ZEA in the biosynthetic pathway. The protein is FAD-linked oxidoreductase ZEB1 of Gibberella zeae (strain ATCC MYA-4620 / CBS 123657 / FGSC 9075 / NRRL 31084 / PH-1) (Wheat head blight fungus).